A 54-amino-acid polypeptide reads, in one-letter code: Sec-independent protein translocase protein TatA (54 aa).

The helical transmembrane segment at 1–21 threads the bilayer; it reads MGMSFSHLLIVLLIIFVLFGA.

The protein belongs to the TatA/E family. As to quaternary structure, the Tat system comprises two distinct complexes: a TatABC complex, containing multiple copies of TatA, TatB and TatC subunits, and a separate TatA complex, containing only TatA subunits. Substrates initially bind to the TatABC complex, which probably triggers association of the separate TatA complex to form the active translocon.

The protein localises to the cell inner membrane. Its function is as follows. Part of the twin-arginine translocation (Tat) system that transports large folded proteins containing a characteristic twin-arginine motif in their signal peptide across membranes. TatA could form the protein-conducting channel of the Tat system. This chain is Sec-independent protein translocase protein TatA, found in Rickettsia canadensis (strain McKiel).